We begin with the raw amino-acid sequence, 441 residues long: tRNA modification GTPase MnmE (441 aa).

(6S)-5-formyl-5,6,7,8-tetrahydrofolate is bound by residues arginine 21, glutamate 79, and lysine 118. A TrmE-type G domain is found at 214-367 (GIHITILGAP…LVAELARVVE (154 aa)). GTP contacts are provided by residues 224-229 (NAGKSS), 243-249 (SAQAGTT), and 268-271 (DTAG). Serine 228 and threonine 249 together coordinate Mg(2+). Lysine 441 lines the (6S)-5-formyl-5,6,7,8-tetrahydrofolate pocket.

This sequence belongs to the TRAFAC class TrmE-Era-EngA-EngB-Septin-like GTPase superfamily. TrmE GTPase family. Homodimer. Heterotetramer of two MnmE and two MnmG subunits. K(+) serves as cofactor.

Its subcellular location is the cytoplasm. Exhibits a very high intrinsic GTPase hydrolysis rate. Involved in the addition of a carboxymethylaminomethyl (cmnm) group at the wobble position (U34) of certain tRNAs, forming tRNA-cmnm(5)s(2)U34. The chain is tRNA modification GTPase MnmE from Paramagnetospirillum magneticum (strain ATCC 700264 / AMB-1) (Magnetospirillum magneticum).